Consider the following 382-residue polypeptide: Succinyl-diaminopimelate desuccinylase (382 aa).

Residue His-73 coordinates Zn(2+). Asp-75 is an active-site residue. Asp-106 lines the Zn(2+) pocket. Glu-140 acts as the Proton acceptor in catalysis. 3 residues coordinate Zn(2+): Glu-141, Glu-169, and His-355.

The protein belongs to the peptidase M20A family. DapE subfamily. Homodimer. Zn(2+) serves as cofactor. Requires Co(2+) as cofactor.

It carries out the reaction N-succinyl-(2S,6S)-2,6-diaminopimelate + H2O = (2S,6S)-2,6-diaminopimelate + succinate. It functions in the pathway amino-acid biosynthesis; L-lysine biosynthesis via DAP pathway; LL-2,6-diaminopimelate from (S)-tetrahydrodipicolinate (succinylase route): step 3/3. In terms of biological role, catalyzes the hydrolysis of N-succinyl-L,L-diaminopimelic acid (SDAP), forming succinate and LL-2,6-diaminopimelate (DAP), an intermediate involved in the bacterial biosynthesis of lysine and meso-diaminopimelic acid, an essential component of bacterial cell walls. This Saccharophagus degradans (strain 2-40 / ATCC 43961 / DSM 17024) protein is Succinyl-diaminopimelate desuccinylase.